The chain runs to 235 residues: MKLNVCYLEMVEYEDALHLQERLHKLRVANELEDTLLLLQHPPVITIGRRGKWENILISKEKLLQMGVKVFEVTRGGDVTYHGPGQIVGYPIFDLGTVGKDIKRFVWLLEEVFINLLKDEYGIEAYRDEKQYTGVWVGGEKIVAIGIAVKKWITMHGFAFNVNTNLEHFSWIIPCGLKDRGVTSLEKLLGHKVEFDDVVYKVAKYFGKVFGAKFRFISKEDLEEIIKIKVEDSER.

Residues 30–214 (NELEDTLLLL…YFGKVFGAKF (185 aa)) enclose the BPL/LPL catalytic domain. Residues 75–82 (RGGDVTYH), 144–146 (AIG), and 157–159 (GFA) each bind substrate. Cysteine 175 serves as the catalytic Acyl-thioester intermediate.

Belongs to the LipB family.

It localises to the cytoplasm. It carries out the reaction octanoyl-[ACP] + L-lysyl-[protein] = N(6)-octanoyl-L-lysyl-[protein] + holo-[ACP] + H(+). It participates in protein modification; protein lipoylation via endogenous pathway; protein N(6)-(lipoyl)lysine from octanoyl-[acyl-carrier-protein]: step 1/2. Functionally, catalyzes the transfer of endogenously produced octanoic acid from octanoyl-acyl-carrier-protein onto the lipoyl domains of lipoate-dependent enzymes. Lipoyl-ACP can also act as a substrate although octanoyl-ACP is likely to be the physiological substrate. This Caldicellulosiruptor saccharolyticus (strain ATCC 43494 / DSM 8903 / Tp8T 6331) protein is Octanoyltransferase.